Consider the following 322-residue polypeptide: uncharacterized protein (322 aa).

Residues 205 to 286 are a coiled coil; the sequence is QEIKNAHAAL…LKKAISEAVQ (82 aa). 2 stretches are compositionally biased toward basic and acidic residues: residues 254–281 and 290–299; these read EKEE…KKAI and DRIEAIEKSR. The segment at 254–322 is disordered; sequence EKEEELNKKD…VQKSIWSGLF (69 aa). Residues 310–322 are compositionally biased toward polar residues; the sequence is SEQVQKSIWSGLF.

The protein to B.subtilis XkdF.

This is an uncharacterized protein from Bacillus subtilis (strain 168).